The following is a 591-amino-acid chain: Polyphenol oxidase D, chloroplastic (591 aa).

A chloroplast-targeting transit peptide spans 1–83; sequence MASLCSNSST…ANAIPLAASA (83 aa). Disulfide bonds link cysteine 94–cysteine 110 and cysteine 109–cysteine 177. Cu cation-binding residues include histidine 176, histidine 194, histidine 203, histidine 324, histidine 328, and histidine 366. Positions 180 to 194 form a cross-link, 2'-(S-cysteinyl)-histidine (Cys-His); that stretch reads CNGAYRIGGKELQVH.

This sequence belongs to the tyrosinase family. Requires Cu(2+) as cofactor.

It is found in the plastid. Its subcellular location is the chloroplast thylakoid lumen. It carries out the reaction 2 catechol + O2 = 2 1,2-benzoquinone + 2 H2O. Catalyzes the oxidation of mono- and o-diphenols to o-diquinones. This Solanum lycopersicum (Tomato) protein is Polyphenol oxidase D, chloroplastic.